We begin with the raw amino-acid sequence, 184 residues long: dCTP deaminase (184 aa).

DCTP contacts are provided by residues 107–112 (KSTYAR), 131–133 (TLE), glutamine 152, tyrosine 166, and glutamine 176. Glutamate 133 functions as the Proton donor/acceptor in the catalytic mechanism.

The protein belongs to the dCTP deaminase family. As to quaternary structure, homotrimer.

The enzyme catalyses dCTP + H2O + H(+) = dUTP + NH4(+). It participates in pyrimidine metabolism; dUMP biosynthesis; dUMP from dCTP (dUTP route): step 1/2. Functionally, catalyzes the deamination of dCTP to dUTP. This Gemmatimonas aurantiaca (strain DSM 14586 / JCM 11422 / NBRC 100505 / T-27) protein is dCTP deaminase.